Reading from the N-terminus, the 225-residue chain is Claudin-17 (225 aa).

At M1–Q7 the chain is on the cytoplasmic side. The helical transmembrane segment at I8–P28 threads the bilayer. The Extracellular segment spans residues Q29–R81. Residues A82–M102 form a helical membrane-spanning segment. Residues K103–V124 are Cytoplasmic-facing. The chain crosses the membrane as a helical span at residues L125 to I145. At R146–A164 the chain is on the extracellular side. The helical transmembrane segment at L165–F185 threads the bilayer. Residues C186–V225 lie on the Cytoplasmic side of the membrane. Residues R194–V225 form a disordered region. A compositionally biased stretch (polar residues) spans T215–V225.

The protein belongs to the claudin family. Does not form homotypic polymeric strands and it is not sufficient to form tight junctions by its own. Interacts with OCLN.

The protein localises to the cell junction. It is found in the tight junction. It localises to the cell membrane. The enzyme catalyses chloride(in) = chloride(out). It catalyses the reaction hydrogencarbonate(in) = hydrogencarbonate(out). The catalysed reaction is bromide(in) = bromide(out). It carries out the reaction iodide(out) = iodide(in). The enzyme catalyses fluoride(in) = fluoride(out). It catalyses the reaction nitrate(in) = nitrate(out). The catalysed reaction is thiocyanate(in) = thiocyanate(out). In terms of biological role, channel-forming tight junction protein with selectivity for anions, including chloride and hydrogencarbonate, and for solutes smaller than 9 Angstrom in diameter. In the kidney proximal tubule, may be involved in quantitative reabsorption of filtered anions. Does not affect water permeability. This Sus scrofa (Pig) protein is Claudin-17 (CLDN17).